A 332-amino-acid polypeptide reads, in one-letter code: Phospholipase A2 inhibitor beta (332 aa).

An N-terminal signal peptide occupies residues 1-23; it reads MKSSVPSLLFVSLVMSLNSYTQQ. Asparagine 35 carries an N-linked (GlcNAc...) asparagine glycan. 8 LRR repeats span residues 78–101, 103–125, 127–149, 150–173, 175–197, 198–221, 223–245, and 247–269; these read LPNL…LFRN, PELH…IFTS, TSLT…WFET, LKEL…CFDK, EKLT…MFSG, LDNL…SFHG, PKLS…VFQP, and NHXV…VAIP. Asparagine 232 carries N-linked (GlcNAc...) asparagine glycosylation. The N-linked (GlcNAc...) asparagine glycan is linked to asparagine 272. The 52-residue stretch at 280–331 folds into the LRRCT domain; the sequence is NPWACNCRMDNLLTWVKEHKIDLYSKQEIVCAFPKSFKGEEATSLHRSQICP.

The protein belongs to the beta-type phospholipase A2 inhibitor family. Homotrimer.

The protein resides in the secreted. Inhibits the enzymatic activity of the basic phospholipase A2 (PLA2). This Elaphe climacophora (Japanese rat snake) protein is Phospholipase A2 inhibitor beta.